Reading from the N-terminus, the 327-residue chain is Protoheme IX farnesyltransferase (327 aa).

7 helical membrane passes run 55-75, 101-121, 124-144, 152-172, 180-200, 237-257, and 278-298; these read LVCT…LNCL, AAFV…VSGV, LAAG…TALL, IVVG…AATG, WLFA…ALLL, FLGI…ILPF, and AKGL…LLVM.

This sequence belongs to the UbiA prenyltransferase family. Protoheme IX farnesyltransferase subfamily.

Its subcellular location is the cell inner membrane. The catalysed reaction is heme b + (2E,6E)-farnesyl diphosphate + H2O = Fe(II)-heme o + diphosphate. The protein operates within porphyrin-containing compound metabolism; heme O biosynthesis; heme O from protoheme: step 1/1. Converts heme B (protoheme IX) to heme O by substitution of the vinyl group on carbon 2 of heme B porphyrin ring with a hydroxyethyl farnesyl side group. The chain is Protoheme IX farnesyltransferase from Synechococcus sp. (strain CC9311).